The chain runs to 281 residues: Ribosomal protein L11 methyltransferase (281 aa).

Residues T131, G152, D174, and N217 each coordinate S-adenosyl-L-methionine.

The protein belongs to the methyltransferase superfamily. PrmA family.

It localises to the cytoplasm. The catalysed reaction is L-lysyl-[protein] + 3 S-adenosyl-L-methionine = N(6),N(6),N(6)-trimethyl-L-lysyl-[protein] + 3 S-adenosyl-L-homocysteine + 3 H(+). Functionally, methylates ribosomal protein L11. The sequence is that of Ribosomal protein L11 methyltransferase from Phocaeicola vulgatus (strain ATCC 8482 / DSM 1447 / JCM 5826 / CCUG 4940 / NBRC 14291 / NCTC 11154) (Bacteroides vulgatus).